The following is a 259-amino-acid chain: Small ribosomal subunit protein uS2 (259 aa).

It belongs to the universal ribosomal protein uS2 family.

This Streptococcus pneumoniae (strain 70585) protein is Small ribosomal subunit protein uS2.